A 162-amino-acid chain; its full sequence is Selenoprotein F (162 aa).

The first 28 residues, 1–28 (MAARRDGWLGPAFGLRLLLATVLQTVSA), serve as a signal peptide directing secretion. A non-standard amino acid (selenocysteine) is located at residue U93.

It belongs to the selenoprotein M/F family. In terms of assembly, forms a tight complex with UGGT1/UGCGL1. Interacts with UGGT2/UGCGL2. Interacts with RDH11.

The protein resides in the endoplasmic reticulum lumen. Functionally, may be involved in redox reactions associated with the formation of disulfide bonds. May contribute to the quality control of protein folding in the endoplasmic reticulum. May regulate protein folding by enhancing the catalytic activity of UGGT1/UGCGL1 and UGGT2/UGCGL2. The sequence is that of Selenoprotein F from Bos taurus (Bovine).